Here is a 129-residue protein sequence, read N- to C-terminus: Histone H2A-IV (129 aa).

This sequence belongs to the histone H2A family. In terms of assembly, the nucleosome is a histone octamer containing two molecules each of H2A, H2B, H3 and H4 assembled in one H3-H4 heterotetramer and two H2A-H2B heterodimers. The octamer wraps approximately 147 bp of DNA.

It localises to the nucleus. Its subcellular location is the chromosome. Functionally, core component of nucleosome. Nucleosomes wrap and compact DNA into chromatin, limiting DNA accessibility to the cellular machineries which require DNA as a template. Histones thereby play a central role in transcription regulation, DNA repair, DNA replication and chromosomal stability. DNA accessibility is regulated via a complex set of post-translational modifications of histones, also called histone code, and nucleosome remodeling. The polypeptide is Histone H2A-IV (Volvox carteri (Green alga)).